The following is a 526-amino-acid chain: GMP synthase [glutamine-hydrolyzing] (526 aa).

The 197-residue stretch at 3 to 199 folds into the Glutamine amidotransferase type-1 domain; sequence KVAIIDFGSQ…FIKIAGCKTD (197 aa). The active-site Nucleophile is Cys-83. Active-site residues include His-174 and Glu-176. Residues 200–392 enclose the GMPS ATP-PPase domain; the sequence is WTMNSFLDEQ…LGISDEILMR (193 aa). 227–233 contacts ATP; it reads SGGVDSS.

In terms of assembly, homodimer.

The enzyme catalyses XMP + L-glutamine + ATP + H2O = GMP + L-glutamate + AMP + diphosphate + 2 H(+). Its pathway is purine metabolism; GMP biosynthesis; GMP from XMP (L-Gln route): step 1/1. Functionally, catalyzes the synthesis of GMP from XMP. This Ehrlichia canis (strain Jake) protein is GMP synthase [glutamine-hydrolyzing].